Consider the following 149-residue polypeptide: Transcriptional repressor NrdR (149 aa).

A zinc finger spans residues 3–33; the sequence is CPFCSSEDTKVVDSRTTIDGSTKRRRECNNC. The region spanning 48-138 is the ATP-cone domain; it reads IYVVKKDNRR…VYKEFDDIKS (91 aa).

This sequence belongs to the NrdR family. Requires Zn(2+) as cofactor.

In terms of biological role, negatively regulates transcription of bacterial ribonucleotide reductase nrd genes and operons by binding to NrdR-boxes. This is Transcriptional repressor NrdR from Fusobacterium nucleatum subsp. nucleatum (strain ATCC 25586 / DSM 15643 / BCRC 10681 / CIP 101130 / JCM 8532 / KCTC 2640 / LMG 13131 / VPI 4355).